A 1070-amino-acid polypeptide reads, in one-letter code: Carbamoyl phosphate synthase large chain (1070 aa).

The segment at 1–401 (MPKRDDIKTI…ALLKAVRSLE (401 aa)) is carboxyphosphate synthetic domain. The ATP site is built by R129, R169, G175, G176, K208, I210, E215, G241, I242, H243, Q284, and E298. An ATP-grasp 1 domain is found at 133-327 (RDLMNELGEP…IAKLAAKIAV (195 aa)). Mg(2+) contacts are provided by Q284, E298, and N300. The Mn(2+) site is built by Q284, E298, and N300. The tract at residues 402 to 546 (IGADHLLLEE…YSTYEEENES (145 aa)) is oligomerization domain. The carbamoyl phosphate synthetic domain stretch occupies residues 547–929 (TRSAKESVIV…ALYKGFVASG (383 aa)). An ATP-grasp 2 domain is found at 671–861 (EKALGILQIP…MANVATRVIL (191 aa)). The ATP site is built by R707, R746, V748, E752, G777, V778, H779, S780, Q820, and E832. Mg(2+)-binding residues include Q820, E832, and N834. Positions 820, 832, and 834 each coordinate Mn(2+). Residues 930–1070 (TTMHDYGTVL…SEVKQPKARV (141 aa)) form the MGS-like domain. Positions 930–1070 (TTMHDYGTVL…SEVKQPKARV (141 aa)) are allosteric domain.

It belongs to the CarB family. In terms of assembly, composed of two chains; the small (or glutamine) chain promotes the hydrolysis of glutamine to ammonia, which is used by the large (or ammonia) chain to synthesize carbamoyl phosphate. Tetramer of heterodimers (alpha,beta)4. Requires Mg(2+) as cofactor. The cofactor is Mn(2+).

It catalyses the reaction hydrogencarbonate + L-glutamine + 2 ATP + H2O = carbamoyl phosphate + L-glutamate + 2 ADP + phosphate + 2 H(+). It carries out the reaction hydrogencarbonate + NH4(+) + 2 ATP = carbamoyl phosphate + 2 ADP + phosphate + 2 H(+). Its pathway is amino-acid biosynthesis; L-arginine biosynthesis; carbamoyl phosphate from bicarbonate: step 1/1. It functions in the pathway pyrimidine metabolism; UMP biosynthesis via de novo pathway; (S)-dihydroorotate from bicarbonate: step 1/3. Functionally, large subunit of the glutamine-dependent carbamoyl phosphate synthetase (CPSase). CPSase catalyzes the formation of carbamoyl phosphate from the ammonia moiety of glutamine, carbonate, and phosphate donated by ATP, constituting the first step of 2 biosynthetic pathways, one leading to arginine and/or urea and the other to pyrimidine nucleotides. The large subunit (synthetase) binds the substrates ammonia (free or transferred from glutamine from the small subunit), hydrogencarbonate and ATP and carries out an ATP-coupled ligase reaction, activating hydrogencarbonate by forming carboxy phosphate which reacts with ammonia to form carbamoyl phosphate. In Listeria monocytogenes serotype 4b (strain CLIP80459), this protein is Carbamoyl phosphate synthase large chain.